Here is a 216-residue protein sequence, read N- to C-terminus: Protein-L-isoaspartate O-methyltransferase (216 aa).

Ser-61 is a catalytic residue.

This sequence belongs to the methyltransferase superfamily. L-isoaspartyl/D-aspartyl protein methyltransferase family.

The protein resides in the cytoplasm. The catalysed reaction is [protein]-L-isoaspartate + S-adenosyl-L-methionine = [protein]-L-isoaspartate alpha-methyl ester + S-adenosyl-L-homocysteine. Catalyzes the methyl esterification of L-isoaspartyl residues in peptides and proteins that result from spontaneous decomposition of normal L-aspartyl and L-asparaginyl residues. It plays a role in the repair and/or degradation of damaged proteins. This is Protein-L-isoaspartate O-methyltransferase from Geobacter metallireducens (strain ATCC 53774 / DSM 7210 / GS-15).